A 3477-amino-acid chain; its full sequence is Abnormal spindle-like microcephaly-associated protein homolog (3477 aa).

Residues 1–34 form a disordered region; the sequence is MANRRVGRGCWEVSPTERRPPAGLRGPATEEEAS. 4 positions are modified to phosphoserine: Ser-283, Ser-367, Ser-392, and Ser-425. Over residues 417-433 the composition is skewed to polar residues; that stretch reads NENSQVPQSPQDWSKSE. 2 disordered regions span residues 417–436 and 563–583; these read NENSQVPQSPQDWSKSEVSP and MPSSTTASVARKRKSDESMED. A Phosphoserine modification is found at Ser-605. The Calponin-homology (CH) 1 domain maps to 920 to 1056; that stretch reads KASKEILLAF…LLWKIAFAFQ (137 aa). The stretch at 1057 to 1076 forms a coiled coil; it reads VDISLNLDQLKEEIAFLKHT. A Phosphoserine modification is found at Ser-1103. In terms of domain architecture, Calponin-homology (CH) 2 spans 1110 to 1261; the sequence is SENIKLLMDW…YLSFLCARLL (152 aa). IQ domains are found at residues 1347–1378, 1393–1422, 1582–1613, 1605–1634, 1632–1661, 1655–1684, 1728–1757, 1751–1782, 1801–1830, 1824–1853, 1874–1903, 1897–1928, 1947–1978, 1970–2001, 2020–2049, 2043–2074, 2093–2124, 2116–2147, 2239–2270, 2262–2293, 2311–2342, 2334–2365, 2384–2415, 2407–2438, 2457–2488, 2480–2511, 2530–2561, 2624–2653, 2665–2696, 2688–2719, 2738–2767, 2814–2845, 2859–2890, 2909–2938, 2932–2963, 2954–2985, 3029–3060, 3079–3110, and 3204–3235; these read QNKAASLIQGYWRRYSTRKRFLKLKYYSIILQ, YLWATVTIQRHWRAYLRRKQDQQRYEMLKS, LKKTIIKFQAHIRKHQQLQKYKKMKKAAVIIQ, MKKAAVIIQTHFRAYIFARKVLASYQKTRS, TRSAVIVLQSAYRGMQARKMYIHILTSVIK, ILTSVIKIQSYYRAYVSKKEFLSLKNATIK, MRESCIKLQAFVRGYLVRKQMRLQRKAVIS, QRKAVISLQSYFRMRKARQYYLKMYKAIIVIQ, VKKAATCLQAAYRGYKIRQLIKQQSIAAVK, QSIAAVKIQSAFRGYNKRVKYQSVLQSIIK, TKAAVVSLQSAYRGWKVRKQIRREHQAALK, EHQAALKIQSAFRMAKAQKQFRLFKTAALVIQ, LRHAVLILQSMWKGKTLRRQLQRQHKCAIIIQ, QHKCAIIIQSYYRMHVQQKKWKIMKKAALLIQ, TKAAVVTLQSAYRGMKVRKRIKDCNKAAVT, CNKAAVTIQSKYRAYKTKKKYATYRASAIIIQ, LKKTAIKIQSVYRGIRVRRHIQHMHRAATYIK, MHRAATYIKAMFKMHQSRISYHTMRKAAIVIQ, LRHSVIYIQAIFRGKKARRHLKMMHVAATLIQ, MHVAATLIQRRFRTLMMRRRFLSLKKTAVWIQ, VQNAVIKIQSSYRRWMIRKKMREMHRAATFIQ, MHRAATFIQATFRMQRVHMRYQALKQASVVIQ, QRHSAVILQAAFRGMKTRRHLKSMHSSATLIQ, MHSSATLIQSRFRSLLVRRRFISLKKATIFVQ, LRKAAITVQSSYRRLMVKKKLQEMQRAAVLIQ, MQRAAVLIQATFRMHRTYVTFQTWKQASILIQ, QWHSAVVIQAAYKGMKARQHLREKHKAAIIIQ, QHQAAIIIQKHCKAFKIRKHYLHLRATVVS, RTQAVICIQSYYRGFKVRRDIQNMHRAATLIQ, MHRAATLIQSFYRMHRAKVDYQTKKTAIVVIQ, VQKSVRTIQAAFRGMKVRQKLKNISEEKMA, QSRAAVTIQKAFRRMVTRKVETQKCAALRIQF, QKRAAITLQHYFRTWQTRKQFLLYRKAAVVLQ, IRSSVIIIQARSKGFIQKRKFQEIKNSTIK, IKNSTIKIQAMWRRYRAKKYLCKVKAACKIQA, KVKAACKIQAWYRCWRAHKEYLAILKAVKIIQ, RHRAACLIQAHYRGYKERQVFLRQKSAALIIQ, FKKSTVILQALVRGWLVRKRILEQRTKIRLLH, and FTSGIIKIQALWRGYSWRKKNDCTKIKAIRLS.

It is found in the cytoplasm. Its subcellular location is the cytoskeleton. The protein resides in the spindle. The protein localises to the nucleus. Functionally, probable role in mitotic spindle regulation and coordination of mitotic processes. May have a preferential role in regulating neurogenesis. The sequence is that of Abnormal spindle-like microcephaly-associated protein homolog (ASPM) from Colobus guereza (Mantled guereza).